Consider the following 84-residue polypeptide: CDC42 small effector protein 2 (84 aa).

2 S-palmitoyl cysteine lipidation sites follow: Cys-10 and Cys-11. The CRIB domain occupies 29–42; sequence IGEPTNFVHTAHVG. Phosphoserine is present on residues Ser-43 and Ser-52.

Belongs to the CDC42SE/SPEC family. As to quaternary structure, interacts with CDC42 (in GTP-bound form). Interacts weakly with RAC1 and not at all with RHOA. As to expression, widely expressed. Expressed at higher level in T-lymphocytes. Highly expressed in CCRF-CEM T-lymphocytes, Jurkat T-lymphocytes, and Raji B-lymphocytes compared (at protein level).

Its subcellular location is the cytoplasm. The protein localises to the cytoskeleton. The protein resides in the cell membrane. It is found in the cell projection. It localises to the phagocytic cup. In terms of biological role, probably involved in the organization of the actin cytoskeleton by acting downstream of CDC42, inducing actin filament assembly. Alters CDC42-induced cell shape changes. In activated T-cells, may play a role in CDC42-mediated F-actin accumulation at the immunological synapse. May play a role in early contractile events in phagocytosis in macrophages. This is CDC42 small effector protein 2 (CDC42SE2) from Homo sapiens (Human).